The following is a 360-amino-acid chain: Phospho-N-acetylmuramoyl-pentapeptide-transferase (360 aa).

A run of 10 helical transmembrane segments spans residues 26 to 46 (AILG…KLIE), 74 to 94 (MGGL…GDLG), 97 to 117 (YVWV…IDDY), 134 to 154 (YILQ…TAAN), 168 to 188 (VMPQ…VGSS), 199 to 219 (GLAI…AYLS), 236 to 256 (SGEL…FLWF), 263 to 283 (VFMG…IAVL), 288 to 308 (ILLV…ILQV), and 338 to 358 (VIVR…ATLK).

This sequence belongs to the glycosyltransferase 4 family. MraY subfamily. Mg(2+) is required as a cofactor.

It is found in the cell inner membrane. The enzyme catalyses UDP-N-acetyl-alpha-D-muramoyl-L-alanyl-gamma-D-glutamyl-meso-2,6-diaminopimeloyl-D-alanyl-D-alanine + di-trans,octa-cis-undecaprenyl phosphate = di-trans,octa-cis-undecaprenyl diphospho-N-acetyl-alpha-D-muramoyl-L-alanyl-D-glutamyl-meso-2,6-diaminopimeloyl-D-alanyl-D-alanine + UMP. It functions in the pathway cell wall biogenesis; peptidoglycan biosynthesis. Functionally, catalyzes the initial step of the lipid cycle reactions in the biosynthesis of the cell wall peptidoglycan: transfers peptidoglycan precursor phospho-MurNAc-pentapeptide from UDP-MurNAc-pentapeptide onto the lipid carrier undecaprenyl phosphate, yielding undecaprenyl-pyrophosphoryl-MurNAc-pentapeptide, known as lipid I. The sequence is that of Phospho-N-acetylmuramoyl-pentapeptide-transferase from Shewanella baltica (strain OS195).